The primary structure comprises 396 residues: Elongation factor Tu (396 aa).

A tr-type G domain is found at 10–205 (KSHANIGTIG…AVDEYIPTPE (196 aa)). Residues 19–26 (GHVDHGKT) form a G1 region. 19–26 (GHVDHGKT) serves as a coordination point for GTP. Thr-26 is a binding site for Mg(2+). A G2 region spans residues 61-65 (GITIS). Residues 82–85 (DCPG) are G3. GTP is bound by residues 82–86 (DCPGH) and 137–140 (NKCD). The G4 stretch occupies residues 137–140 (NKCD). The G5 stretch occupies residues 175-177 (SAL).

It belongs to the TRAFAC class translation factor GTPase superfamily. Classic translation factor GTPase family. EF-Tu/EF-1A subfamily. As to quaternary structure, monomer.

It localises to the cytoplasm. It catalyses the reaction GTP + H2O = GDP + phosphate + H(+). GTP hydrolase that promotes the GTP-dependent binding of aminoacyl-tRNA to the A-site of ribosomes during protein biosynthesis. The protein is Elongation factor Tu of Bacillus pumilus (strain SAFR-032).